The sequence spans 194 residues: Small ribosomal subunit protein uS5 (194 aa).

Residues 26 to 89 (LEEKVVEIRR…ADAKKHLIRV (64 aa)) enclose the S5 DRBM domain.

The protein belongs to the universal ribosomal protein uS5 family. Part of the 30S ribosomal subunit. Contacts proteins S4 and S8.

Functionally, with S4 and S12 plays an important role in translational accuracy. Its function is as follows. Located at the back of the 30S subunit body where it stabilizes the conformation of the head with respect to the body. The sequence is that of Small ribosomal subunit protein uS5 from Persephonella marina (strain DSM 14350 / EX-H1).